We begin with the raw amino-acid sequence, 64 residues long: Chromatin protein Cren7 (64 aa).

The protein belongs to the Cren7 family. Monomer. In terms of processing, methylated at multiple sites, to varying extents.

The protein resides in the chromosome. It is found in the cytoplasm. Its function is as follows. A chromatin protein, binds double-stranded DNA without sequence specificity. Constrains negative DNA supercoils. The polypeptide is Chromatin protein Cren7 (Aeropyrum pernix (strain ATCC 700893 / DSM 11879 / JCM 9820 / NBRC 100138 / K1)).